A 199-amino-acid polypeptide reads, in one-letter code: NAD(P)H dehydrogenase (quinone) (199 aa).

The region spanning 4–190 (VLVLYYSAYG…DAARFQGAHV (187 aa)) is the Flavodoxin-like domain. FMN is bound by residues 10 to 15 (SAYGHI) and 78 to 80 (TRY). NAD(+) is bound at residue Tyr12. Trp98 is a binding site for substrate. FMN contacts are provided by residues 113-119 (SSATQHG) and His134.

Belongs to the WrbA family. FMN is required as a cofactor.

It catalyses the reaction a quinone + NADH + H(+) = a quinol + NAD(+). The catalysed reaction is a quinone + NADPH + H(+) = a quinol + NADP(+). The protein is NAD(P)H dehydrogenase (quinone) of Sinorhizobium fredii (strain NBRC 101917 / NGR234).